The sequence spans 477 residues: Proline--tRNA ligase (477 aa).

Belongs to the class-II aminoacyl-tRNA synthetase family. ProS type 3 subfamily. Homodimer.

Its subcellular location is the cytoplasm. It carries out the reaction tRNA(Pro) + L-proline + ATP = L-prolyl-tRNA(Pro) + AMP + diphosphate. Catalyzes the attachment of proline to tRNA(Pro) in a two-step reaction: proline is first activated by ATP to form Pro-AMP and then transferred to the acceptor end of tRNA(Pro). The polypeptide is Proline--tRNA ligase (Methanocorpusculum labreanum (strain ATCC 43576 / DSM 4855 / Z)).